The primary structure comprises 137 residues: Large ribosomal subunit protein uL16c (137 aa).

The protein belongs to the universal ribosomal protein uL16 family. In terms of assembly, part of the 50S ribosomal subunit.

Its subcellular location is the plastid. It is found in the chloroplast. The polypeptide is Large ribosomal subunit protein uL16c (Thalassiosira pseudonana (Marine diatom)).